A 408-amino-acid chain; its full sequence is MAEYKNIVLLKGLENMEDYQFRTVKSLLRKELKLTKKMQEDYDRIQLADWMEDKFPKDAGLDKLIKVCEHIKDLKDLAKKLKTEKAKVQEKKKGKCKTAGKKKGQDELSSSESLFINKESYKSVPSSKKKRKQITKTEGGKKKKLTQEQAQLPETSGTNIKKEEDCLQNPHKSPPTPSSSSSNKAPRRGTVPKEPSREEGHHQGPKQVMVLKVTEPFTYDFEETKRMFHATVATETEFFRVKVFDTALMSKFIPGKIIAISHYIGCNGFLEIYRASCVSDVNINPTMIISNTLSESAIATPKISYLLSQAKGTFVNGEFVVFKKSERHECICYGIGDDTGKMAVVVYGRLTNVRCEPGSKLRLVCFELTSTKDVCLLRSVRHSYMQVINEGKPLNPDSVRRNSLEPYF.

The Pyrin domain maps to 1 to 87 (MAEYKNIVLL…AKKLKTEKAK (87 aa)). Positions 84 to 208 (EKAKVQEKKK…EGHHQGPKQV (125 aa)) are disordered. Positions 92 to 102 (KKGKCKTAGKK) are enriched in basic residues. Residues 150–159 (AQLPETSGTN) show a composition bias toward polar residues. Residues 190–388 (TVPKEPSREE…SVRHSYMQVI (199 aa)) form the HIN-200 domain.

It belongs to the HIN-200 family. Constitutively expressed in the thymus, bone marrow and spleen. Isoform 1 and isoform 3 are present in liver (at protein level).

Its subcellular location is the nucleus. The sequence is that of Interferon-activable protein 203 (Ifi203) from Mus musculus (Mouse).